The following is a 479-amino-acid chain: ATP synthase subunit beta (479 aa).

153-160 (GGAGVGKT) provides a ligand contact to ATP.

It belongs to the ATPase alpha/beta chains family. As to quaternary structure, F-type ATPases have 2 components, CF(1) - the catalytic core - and CF(0) - the membrane proton channel. CF(1) has five subunits: alpha(3), beta(3), gamma(1), delta(1), epsilon(1). CF(0) has three main subunits: a(1), b(2) and c(9-12). The alpha and beta chains form an alternating ring which encloses part of the gamma chain. CF(1) is attached to CF(0) by a central stalk formed by the gamma and epsilon chains, while a peripheral stalk is formed by the delta and b chains.

The protein resides in the cell membrane. It catalyses the reaction ATP + H2O + 4 H(+)(in) = ADP + phosphate + 5 H(+)(out). Its function is as follows. Produces ATP from ADP in the presence of a proton gradient across the membrane. The catalytic sites are hosted primarily by the beta subunits. The sequence is that of ATP synthase subunit beta from Lactobacillus helveticus (strain DPC 4571).